The sequence spans 1273 residues: Paired amphipathic helix protein Sin3a (1273 aa).

Disordered regions lie at residues 1–23 (MKRR…IPGS) and 87–110 (HPTA…PPVA). S10 is subject to Phosphoserine. Residues 119 to 189 (QRLKVEDALS…MGFNTFLPPG (71 aa)) form the PAH 1 domain. The interaction with HCFC1 stretch occupies residues 119-196 (QRLKVEDALS…PPGYKIEVQT (78 aa)). Residues K122 and K134 each participate in a glycyl lysine isopeptide (Lys-Gly) (interchain with G-Cter in SUMO2) cross-link. The interval 205–297 (PGQVHQIPTH…ISLGTAPSLQ (93 aa)) is disordered. Residues 205 to 480 (PGQVHQIPTH…RKALRSAEAY (276 aa)) form an interaction with REST region. Low complexity predominate over residues 228–237 (SQPSAQSAPA). Residues 238–248 (PAQPAPQPPPA) are compositionally biased toward pro residues. Residues 252 to 266 (KPSQLQAHTPASQQT) are compositionally biased toward polar residues. Residues 267–282 (PPLPPYASPRSPPVQP) are compositionally biased toward pro residues. At S277 the chain carries Phosphoserine. T284 carries the phosphothreonine modification. The segment covering 284–297 (TPVTISLGTAPSLQ) has biased composition (polar residues). The PAH 2 domain maps to 300–383 (QPVEFNHAIN…SEFGQFLPDA (84 aa)). The interval 398–446 (DSVRNDHGGTVKKPQLNNKPQRPSQNGCQIRRHPTGTTPPVKKKPKLLN) is disordered. The span at 412-425 (QLNNKPQRPSQNGC) shows a compositional bias: polar residues. In terms of domain architecture, PAH 3 spans 456 to 525 (SKHGGGTESL…NWFKNFLGYK (70 aa)). The tract at residues 458 to 525 (HGGGTESLFF…NWFKNFLGYK (68 aa)) is interaction with SAP30. K469 carries the N6-acetyllysine modification. Positions 523-850 (GYKESVHLET…EMDVDEATGA (328 aa)) are interaction with NCOR1. The tract at residues 524–659 (YKESVHLETY…KFRLDNTLGG (136 aa)) is interaction with SUDS3 and SAP130. K563 is covalently cross-linked (Glycyl lysine isopeptide (Lys-Gly) (interchain with G-Cter in SUMO2)). The tract at residues 687–829 (NPSIAVPIVL…IPDLLFAQRG (143 aa)) is interaction with HDAC1 and ARID4B. Phosphoserine is present on residues S832 and S860. 2 positions are modified to N6-acetyllysine: K865 and K875. An interaction with OGT region spans residues 888 to 967 (VNNNWYIFMR…YYPAFLDMVR (80 aa)). Residues 903–932 (CLRLLRICSQAERQIEEENREREWEREVLG) adopt a coiled-coil conformation. Residues S940, S1089, and S1112 each carry the phosphoserine modification. Residues 1136–1156 (CQRGREQQEKEGKEGNSKKTM) form a disordered region. Over residues 1138–1156 (RGREQQEKEGKEGNSKKTM) the composition is skewed to basic and acidic residues.

Interacts with ARID4B, BRMS1L, HCFC1, HDAC1, HDAC2, MXI1, SAP30L, SAP130, SFPQ and TOPORS. Interacts with OGT (via TPRs 1-6); the interaction mediates transcriptional repression in parallel with histone deacetylase. Interacts with BAZ2A, MXD1, MXD3, MXD4, MBD2, DACH1, NCOR1, NR4A2, REST, RLIM, SAP30, SETDB1, SMYD2, and SUDS3. Interacts with PHF12 in a complex composed of HDAC1, PHF12 and SAP30. Interacts with TET1; the interaction recruits SIN3A to gene promoters. The large PER complex involved in the histone deacetylation is composed of at least HDAC1, PER2, SFPQ and SIN3A. Interacts with KLF11. Interacts with PPHLN1. Found in a complex with YY1, GON4L and HDAC1. Interacts (via PAH2) with FOXK1. Interacts with FOXK2. Found in a complex composed of at least SINHCAF, SIN3A, HDAC1, SAP30, RBBP4, OGT and TET1. Interacts with SINHCAF. Interacts with SPHK2. Post-translationally, SUMO1 sumoylated by TOPORS. Probably desumoylated by SENP2. As to expression, expressed in the developing brain, with highest levels of expression detected in the ventricular zone of various cortical regions.

The protein resides in the nucleus. It is found in the nucleolus. In terms of biological role, acts as a transcriptional repressor. Corepressor for REST. Interacts with MXI1 to repress MYC responsive genes and antagonize MYC oncogenic activities. Also interacts with MXD1-MAX heterodimers to repress transcription by tethering SIN3A to DNA. Acts cooperatively with OGT to repress transcription in parallel with histone deacetylation. Involved in the control of the circadian rhythms. Required for the transcriptional repression of circadian target genes, such as PER1, mediated by the large PER complex through histone deacetylation. Cooperates with FOXK1 to regulate cell cycle progression probably by repressing cell cycle inhibitor genes expression. Required for cortical neuron differentiation and callosal axon elongation. This Homo sapiens (Human) protein is Paired amphipathic helix protein Sin3a.